A 290-amino-acid chain; its full sequence is 4-hydroxybenzoate octaprenyltransferase (290 aa).

A run of 8 helical transmembrane segments spans residues 23–43 (IGALLLLWPTLWALWVATPGV), 46–66 (LWILAVFVAGVWLMRAAGCVV), 99–119 (LFVVLVLISFLLVLTLNTMTI), 141–161 (LPQVVLGAAFGWSIPMAFAAV), 163–183 (ESVPLSCWLMFLANILWAVAY), 213–233 (LIIGILQIGVLALMAIIGELN), 234–254 (GLGWGYYWSILVAGALFVYQQ), and 268–288 (AFMNNNYVGLVLFLGLAMSYW).

Belongs to the UbiA prenyltransferase family. Requires Mg(2+) as cofactor.

Its subcellular location is the cell inner membrane. The enzyme catalyses all-trans-octaprenyl diphosphate + 4-hydroxybenzoate = 4-hydroxy-3-(all-trans-octaprenyl)benzoate + diphosphate. The protein operates within cofactor biosynthesis; ubiquinone biosynthesis. In terms of biological role, catalyzes the prenylation of para-hydroxybenzoate (PHB) with an all-trans polyprenyl group. Mediates the second step in the final reaction sequence of ubiquinone-8 (UQ-8) biosynthesis, which is the condensation of the polyisoprenoid side chain with PHB, generating the first membrane-bound Q intermediate 3-octaprenyl-4-hydroxybenzoate. This Escherichia coli O6:K15:H31 (strain 536 / UPEC) protein is 4-hydroxybenzoate octaprenyltransferase.